We begin with the raw amino-acid sequence, 892 residues long: Bifunctional uridylyltransferase/uridylyl-removing enzyme (892 aa).

Positions 1-348 (MPNFTGNTRP…LVDAKVHVRP (348 aa)) are uridylyltransferase. The uridylyl-removing stretch occupies residues 349–710 (INERFQARNG…RIHNQEPGTM (362 aa)). In terms of domain architecture, HD spans 467–589 (VDEHTLFLIH…VGDERRLNHL (123 aa)). ACT domains follow at residues 711 to 786 (EVFI…LTQP) and 822 to 892 (VMEL…YLER).

It belongs to the GlnD family. Mg(2+) serves as cofactor.

The catalysed reaction is [protein-PII]-L-tyrosine + UTP = [protein-PII]-uridylyl-L-tyrosine + diphosphate. The enzyme catalyses [protein-PII]-uridylyl-L-tyrosine + H2O = [protein-PII]-L-tyrosine + UMP + H(+). Its activity is regulated as follows. Uridylyltransferase (UTase) activity is inhibited by glutamine, while glutamine activates uridylyl-removing (UR) activity. Functionally, modifies, by uridylylation and deuridylylation, the PII regulatory proteins (GlnB and homologs), in response to the nitrogen status of the cell that GlnD senses through the glutamine level. Under low glutamine levels, catalyzes the conversion of the PII proteins and UTP to PII-UMP and PPi, while under higher glutamine levels, GlnD hydrolyzes PII-UMP to PII and UMP (deuridylylation). Thus, controls uridylylation state and activity of the PII proteins, and plays an important role in the regulation of nitrogen assimilation and metabolism. The protein is Bifunctional uridylyltransferase/uridylyl-removing enzyme of Nitrosococcus oceani (strain ATCC 19707 / BCRC 17464 / JCM 30415 / NCIMB 11848 / C-107).